We begin with the raw amino-acid sequence, 124 residues long: Heat-labile enterotoxin B chain (124 aa).

The N-terminal stretch at 1-21 (MNKVKFYVLFTALLSSLCAHG) is a signal peptide. Cysteine 30 and cysteine 107 are joined by a disulfide.

Heterohexamer of one A chain and of five B chains.

Its function is as follows. The biological activity of the toxin is produced by the A chain, which activates intracellular adenyl cyclase. This chain is Heat-labile enterotoxin B chain (eltB), found in Escherichia coli.